The sequence spans 476 residues: Argininosuccinate lyase (476 aa).

This sequence belongs to the lyase 1 family. Argininosuccinate lyase subfamily.

The protein resides in the cytoplasm. The enzyme catalyses 2-(N(omega)-L-arginino)succinate = fumarate + L-arginine. Its pathway is amino-acid biosynthesis; L-arginine biosynthesis; L-arginine from L-ornithine and carbamoyl phosphate: step 3/3. This Nitrosospira multiformis (strain ATCC 25196 / NCIMB 11849 / C 71) protein is Argininosuccinate lyase.